A 744-amino-acid polypeptide reads, in one-letter code: Probable ubiquitin carboxyl-terminal hydrolase MINDY-4 (744 aa).

Residues serine 143, serine 220, and serine 224 each carry the phosphoserine modification. Residues 211 to 358 (GMMAGPVASS…QLVSDRTDDK (148 aa)) are disordered. A compositionally biased stretch (low complexity) spans 265–277 (VPDSSSDSVSRSP). The span at 290–299 (NVTSSSQGLS) shows a compositional bias: polar residues. Residue serine 295 is modified to Phosphoserine. Positions 300–310 (QRDRPRLRSVS) are enriched in basic and acidic residues. Cysteine 443 acts as the Nucleophile in catalysis. Residue histidine 664 is the Proton acceptor of the active site.

This sequence belongs to the MINDY deubiquitinase family. FAM188 subfamily.

The catalysed reaction is Thiol-dependent hydrolysis of ester, thioester, amide, peptide and isopeptide bonds formed by the C-terminal Gly of ubiquitin (a 76-residue protein attached to proteins as an intracellular targeting signal).. In terms of biological role, probable hydrolase that can remove 'Lys-48'-linked conjugated ubiquitin from proteins. The sequence is that of Probable ubiquitin carboxyl-terminal hydrolase MINDY-4 (Mindy4) from Mus musculus (Mouse).